We begin with the raw amino-acid sequence, 288 residues long: dTDP-4-keto-6-deoxy-D-glucose reductase (288 aa).

NADH is bound by residues 12–14 (GML), 38–39 (DI), 62–64 (AWT), Y127, and K131. NADPH contacts are provided by residues 13 to 14 (ML), 38 to 39 (DI), 62 to 64 (AWT), Y127, and K131. Y127 serves as the catalytic Proton donor/acceptor.

This sequence belongs to the dTDP-4-dehydrorhamnose reductase family. The cofactor is Mg(2+).

It functions in the pathway antibiotic biosynthesis; novobiocin biosynthesis. Its function is as follows. Reduces the product formed from the reaction of NovW with dTDP-4-keto-6-deoxy-D-glucose to result in dTDP-5-methyl-L-rhamnose in the novobiocin biosynthesis pathway, an aminocoumarin family antibiotic that targets bacterial DNA gyrases. The polypeptide is dTDP-4-keto-6-deoxy-D-glucose reductase (novS) (Streptomyces niveus (Streptomyces spheroides)).